A 206-amino-acid polypeptide reads, in one-letter code: Adenylate kinase (206 aa).

An ATP-binding site is contributed by 10-15 (GAGKGT). Residues 30-59 (STGDILREAVQKGTPLGKKAKEYMERGELV) are NMP. AMP-binding positions include Thr-31, 57–59 (ELV), 82–85 (GFPR), and Gln-89. ATP contacts are provided by residues Arg-120, Arg-124, and 133 to 134 (VY). An LID region spans residues 123 to 153 (GRRINPETGEVYHVKYNPPPPGVKVIQREDD). Arg-161 lines the AMP pocket. Lys-189 contributes to the ATP binding site.

It belongs to the adenylate kinase family. In terms of assembly, monomer.

It is found in the cytoplasm. The enzyme catalyses AMP + ATP = 2 ADP. It functions in the pathway purine metabolism; AMP biosynthesis via salvage pathway; AMP from ADP: step 1/1. In terms of biological role, catalyzes the reversible transfer of the terminal phosphate group between ATP and AMP. Plays an important role in cellular energy homeostasis and in adenine nucleotide metabolism. The protein is Adenylate kinase of Aquifex aeolicus (strain VF5).